Reading from the N-terminus, the 125-residue chain is Large ribosomal subunit protein bL20 (125 aa).

This sequence belongs to the bacterial ribosomal protein bL20 family.

Its function is as follows. Binds directly to 23S ribosomal RNA and is necessary for the in vitro assembly process of the 50S ribosomal subunit. It is not involved in the protein synthesizing functions of that subunit. The protein is Large ribosomal subunit protein bL20 of Methylobacterium radiotolerans (strain ATCC 27329 / DSM 1819 / JCM 2831 / NBRC 15690 / NCIMB 10815 / 0-1).